A 277-amino-acid chain; its full sequence is Large ribosomal subunit protein uL2 (277 aa).

The tract at residues 219 to 277 is disordered; it reads TVRGSVMNPNDHPHGGGEGKAPVGRKAPSTPWGKPALGLKTRNKKAKSDKLIVRRRNEK. Basic and acidic residues predominate over residues 264 to 277; it reads AKSDKLIVRRRNEK.

The protein belongs to the universal ribosomal protein uL2 family. In terms of assembly, part of the 50S ribosomal subunit. Forms a bridge to the 30S subunit in the 70S ribosome.

Its function is as follows. One of the primary rRNA binding proteins. Required for association of the 30S and 50S subunits to form the 70S ribosome, for tRNA binding and peptide bond formation. It has been suggested to have peptidyltransferase activity; this is somewhat controversial. Makes several contacts with the 16S rRNA in the 70S ribosome. This is Large ribosomal subunit protein uL2 from Streptococcus pneumoniae serotype 2 (strain D39 / NCTC 7466).